The chain runs to 173 residues: Photosystem I assembly protein Ycf3 (173 aa).

3 TPR repeats span residues 35-68, 72-105, and 120-153; these read AFAY…EEDP, SYTF…NPKM, and GEQA…APDN.

The protein belongs to the Ycf3 family.

It localises to the plastid. The protein localises to the cyanelle thylakoid membrane. Essential for the assembly of the photosystem I (PSI) complex. May act as a chaperone-like factor to guide the assembly of the PSI subunits. This chain is Photosystem I assembly protein Ycf3, found in Cyanophora paradoxa.